Reading from the N-terminus, the 158-residue chain is Ecotin (158 aa).

The signal sequence occupies residues 1–21; it reads MRLLPLASVTLLSVLCAQAFA. Cysteines 67 and 104 form a disulfide.

It belongs to the protease inhibitor I11 (ecotin) family. As to quaternary structure, homodimer.

It localises to the periplasm. Functionally, general inhibitor of family S1 serine proteases. The chain is Ecotin from Pseudomonas fluorescens (strain ATCC BAA-477 / NRRL B-23932 / Pf-5).